Here is an 824-residue protein sequence, read N- to C-terminus: Glycerol-3-phosphate acyltransferase (824 aa).

Residues 302–307 (CHRSHM) carry the HXXXXD motif motif.

This sequence belongs to the GPAT/DAPAT family.

Its subcellular location is the cell inner membrane. It carries out the reaction sn-glycerol 3-phosphate + an acyl-CoA = a 1-acyl-sn-glycero-3-phosphate + CoA. Its pathway is phospholipid metabolism; CDP-diacylglycerol biosynthesis; CDP-diacylglycerol from sn-glycerol 3-phosphate: step 1/3. The sequence is that of Glycerol-3-phosphate acyltransferase from Actinobacillus pleuropneumoniae serotype 3 (strain JL03).